The following is a 275-amino-acid chain: Polyamine aminopropyltransferase (275 aa).

The PABS domain occupies aspartate 2–lysine 235. S-methyl-5'-thioadenosine is bound at residue glutamine 31. Residues histidine 62 and aspartate 86 each contribute to the spermidine site. S-methyl-5'-thioadenosine contacts are provided by residues glutamate 106 and aspartate 137 to glycine 138. Aspartate 155 (proton acceptor) is an active-site residue. Aspartate 155–aspartate 158 is a spermidine binding site.

The protein belongs to the spermidine/spermine synthase family. Homodimer or homotetramer.

The protein localises to the cytoplasm. The enzyme catalyses S-adenosyl 3-(methylsulfanyl)propylamine + putrescine = S-methyl-5'-thioadenosine + spermidine + H(+). The protein operates within amine and polyamine biosynthesis; spermidine biosynthesis; spermidine from putrescine: step 1/1. Functionally, catalyzes the irreversible transfer of a propylamine group from the amino donor S-adenosylmethioninamine (decarboxy-AdoMet) to putrescine (1,4-diaminobutane) to yield spermidine. The chain is Polyamine aminopropyltransferase from Clostridium kluyveri (strain NBRC 12016).